The sequence spans 89 residues: Small ribosomal subunit protein bS18 (89 aa).

The protein belongs to the bacterial ribosomal protein bS18 family. In terms of assembly, part of the 30S ribosomal subunit. Forms a tight heterodimer with protein bS6.

Functionally, binds as a heterodimer with protein bS6 to the central domain of the 16S rRNA, where it helps stabilize the platform of the 30S subunit. This chain is Small ribosomal subunit protein bS18, found in Treponema denticola (strain ATCC 35405 / DSM 14222 / CIP 103919 / JCM 8153 / KCTC 15104).